The sequence spans 99 residues: DNA-directed RNA polymerase subunit omega (99 aa).

It belongs to the RNA polymerase subunit omega family. As to quaternary structure, the RNAP catalytic core consists of 2 alpha, 1 beta, 1 beta' and 1 omega subunit. When a sigma factor is associated with the core the holoenzyme is formed, which can initiate transcription.

The catalysed reaction is RNA(n) + a ribonucleoside 5'-triphosphate = RNA(n+1) + diphosphate. In terms of biological role, promotes RNA polymerase assembly. Latches the N- and C-terminal regions of the beta' subunit thereby facilitating its interaction with the beta and alpha subunits. This chain is DNA-directed RNA polymerase subunit omega, found in Deinococcus geothermalis (strain DSM 11300 / CIP 105573 / AG-3a).